A 329-amino-acid polypeptide reads, in one-letter code: Protein PRY2 (329 aa).

An N-terminal signal peptide occupies residues 1 to 18; the sequence is MKFSKVSLLAASASVALS. The segment covering 122 to 131 has biased composition (polar residues); it reads TSASATQDDV. The disordered stretch occupies residues 122-197; the sequence is TSASATQDDV…SSSDFSTSMV (76 aa). Residues 132–190 are compositionally biased toward low complexity; it reads TTTLTSSTQPTSTTTPTTTTTSPTTTTSPTTTASPTTTASPTTATTTQSTASSTQSSSS. One can recognise an SCP domain in the interval 197 to 311; sequence VNEHNTKRAL…EWGDYIICSY (115 aa).

Belongs to the CRISP family. O-glycosylated.

It is found in the secreted. In terms of biological role, secreted protein required for efficient export of lipids such as acetylated sterols. Acts in detoxification of hydrophobic compounds. In Saccharomyces cerevisiae (strain ATCC 204508 / S288c) (Baker's yeast), this protein is Protein PRY2 (PRY2).